Reading from the N-terminus, the 785-residue chain is Endonuclease MutS2 (785 aa).

333-340 provides a ligand contact to ATP; the sequence is GPNTGGKT. The 76-residue stretch at 710 to 785 folds into the Smr domain; it reads LDLRGQRYDE…GNGATIVQLK (76 aa).

It belongs to the DNA mismatch repair MutS family. MutS2 subfamily. Homodimer. Binds to stalled ribosomes, contacting rRNA.

Its function is as follows. Endonuclease that is involved in the suppression of homologous recombination and thus may have a key role in the control of bacterial genetic diversity. Acts as a ribosome collision sensor, splitting the ribosome into its 2 subunits. Detects stalled/collided 70S ribosomes which it binds and splits by an ATP-hydrolysis driven conformational change. Acts upstream of the ribosome quality control system (RQC), a ribosome-associated complex that mediates the extraction of incompletely synthesized nascent chains from stalled ribosomes and their subsequent degradation. Probably generates substrates for RQC. This is Endonuclease MutS2 from Lactobacillus acidophilus (strain ATCC 700396 / NCK56 / N2 / NCFM).